The primary structure comprises 515 residues: Maturase K (515 aa).

Belongs to the intron maturase 2 family. MatK subfamily.

The protein resides in the plastid. It localises to the chloroplast. Usually encoded in the trnK tRNA gene intron. Probably assists in splicing its own and other chloroplast group II introns. This Pinus clausa (Sand pine) protein is Maturase K.